We begin with the raw amino-acid sequence, 55 residues long: Large ribosomal subunit protein bL33 (55 aa).

Belongs to the bacterial ribosomal protein bL33 family.

The polypeptide is Large ribosomal subunit protein bL33 (Novosphingobium aromaticivorans (strain ATCC 700278 / DSM 12444 / CCUG 56034 / CIP 105152 / NBRC 16084 / F199)).